The primary structure comprises 155 residues: Ribosomal RNA large subunit methyltransferase H (155 aa).

S-adenosyl-L-methionine is bound by residues Leu-72, Gly-103, and Leu-122–Trp-127.

It belongs to the RNA methyltransferase RlmH family. Homodimer.

The protein localises to the cytoplasm. The enzyme catalyses pseudouridine(1915) in 23S rRNA + S-adenosyl-L-methionine = N(3)-methylpseudouridine(1915) in 23S rRNA + S-adenosyl-L-homocysteine + H(+). Specifically methylates the pseudouridine at position 1915 (m3Psi1915) in 23S rRNA. The polypeptide is Ribosomal RNA large subunit methyltransferase H (Cereibacter sphaeroides (strain ATCC 17029 / ATH 2.4.9) (Rhodobacter sphaeroides)).